A 183-amino-acid polypeptide reads, in one-letter code: Macro domain-containing protein (183 aa).

Residues 1–174 (MKKVHLIQAD…IYKNILSNID (174 aa)) form the Macro domain.

Belongs to the MacroD-type family.

This Acinetobacter sp. (strain ED45-25) protein is Macro domain-containing protein.